A 652-amino-acid chain; its full sequence is MEKRMKELVDKLNQYAKEYYTEDNPSVSDAEYDKLYRELVTLEAEHPELVQADSPTHRVGGLVLDGFEKYQHEYPLYSLQDAFSREELDAFDKRIKSEFPNADYMAELKIDGLSISLTYVDGILQVGATRGDGSVGENITENVKRISDIPLKLDQPLNITVRGECYLPRAEFERINTQRQENGEAEFANPRNAAAGTLRQLDTKVVAERRLATFFYQEAGPTERLTQNDVLNEVAELGFSVNPRRIVTSSMDEIWDFIQAVGQDRDHLAYDIDGVVIKVNSLAMQEELGFTVKAPRWAIAYKFPAEEKEAKLLSVDWQVGRTGVVTPTANLTPVQLAGTTVSRATLHNVDYITEKDIRIGDTVIVYKAGDIIPAVLRVVESKRTTQEAMPVPSQCPSCGSGLLHFEDEVALRCINPSCPAQIKEGLIHFASRDAMNISGMGPSVVEKLFKAELVKEVADIYGLNSQDFLQLEGFKEKSAEKLYAAIQASKENSAEKLLYGLGIRHVGAKVSKQLLESFGTIKELASADVQAIAAVDGLGEVIAKSIQRYFAKEEAQVLLKELESYGVNLSYLGQKVTDDAILSGKTVVLTGKLEHLKRSEAKAKLEALGAKVTGSVSKKTDLVVAGSDAGSKLEKAQSLGIEVKDEAWLLDL.

NAD(+) contacts are provided by residues 29–33 (DAEYD), 78–79 (SL), and Glu-107. The N6-AMP-lysine intermediate role is filled by Lys-109. 4 residues coordinate NAD(+): Arg-130, Glu-164, Lys-278, and Lys-302. Cys-395, Cys-398, Cys-413, and Cys-418 together coordinate Zn(2+). Residues 577 to 652 (TDDAILSGKT…VKDEAWLLDL (76 aa)) enclose the BRCT domain.

The protein belongs to the NAD-dependent DNA ligase family. LigA subfamily. Mg(2+) serves as cofactor. Mn(2+) is required as a cofactor.

The enzyme catalyses NAD(+) + (deoxyribonucleotide)n-3'-hydroxyl + 5'-phospho-(deoxyribonucleotide)m = (deoxyribonucleotide)n+m + AMP + beta-nicotinamide D-nucleotide.. In terms of biological role, DNA ligase that catalyzes the formation of phosphodiester linkages between 5'-phosphoryl and 3'-hydroxyl groups in double-stranded DNA using NAD as a coenzyme and as the energy source for the reaction. It is essential for DNA replication and repair of damaged DNA. The chain is DNA ligase from Streptococcus thermophilus (strain ATCC BAA-491 / LMD-9).